Consider the following 286-residue polypeptide: MHIKVVHKSVKIKFSKMHGLGNDFIIINAMMQKTFPVTSNIIQNLSNRYTGIGFDQLLLVENSKNVNIDFHYRIFNANGTEVSQCGNGARCFALFVLLKKLTKKRTLYVSTNTTTLILNVLNNGNVCVDMGVPCFKLKNIFGENIIENSLHSIKFVNKIINYDLVSIGNPHCIIYVNNLKKYPVKKIGFYLSTHKIFPEGINVNFVEVLSKNEIALRVYERGVGETLACGSGACASVALGIQQGLLFNEVQVNLLNGILKINWKGGSEKLYMTGPAVHVYDGYFYL.

Residues N22, Q56, and N76 each contribute to the substrate site. C85 acts as the Proton donor in catalysis. Residues 86-87 (GN), N169, N202, and 220-221 (ER) each bind substrate. C229 acts as the Proton acceptor in catalysis. Substrate is bound at residue 230–231 (GS).

Belongs to the diaminopimelate epimerase family. In terms of assembly, homodimer.

It localises to the cytoplasm. It carries out the reaction (2S,6S)-2,6-diaminopimelate = meso-2,6-diaminopimelate. It participates in amino-acid biosynthesis; L-lysine biosynthesis via DAP pathway; DL-2,6-diaminopimelate from LL-2,6-diaminopimelate: step 1/1. Its function is as follows. Catalyzes the stereoinversion of LL-2,6-diaminopimelate (L,L-DAP) to meso-diaminopimelate (meso-DAP), a precursor of L-lysine and an essential component of the bacterial peptidoglycan. This Buchnera aphidicola subsp. Baizongia pistaciae (strain Bp) protein is Diaminopimelate epimerase.